The chain runs to 247 residues: Cell division protein ZapD (247 aa).

This sequence belongs to the ZapD family. As to quaternary structure, interacts with FtsZ.

It is found in the cytoplasm. In terms of biological role, cell division factor that enhances FtsZ-ring assembly. Directly interacts with FtsZ and promotes bundling of FtsZ protofilaments, with a reduction in FtsZ GTPase activity. This is Cell division protein ZapD from Citrobacter koseri (strain ATCC BAA-895 / CDC 4225-83 / SGSC4696).